The primary structure comprises 1063 residues: Retinoblastoma-like protein 1 (1063 aa).

Phosphothreonine is present on residues Thr-332, Thr-369, and Thr-385. Positions 383-584 are domain A; the sequence is VTTPVASATQ…WEALHASANR (202 aa). The interval 383–944 is pocket; binds T and E1A; it reads VTTPVASATQ…GRVKSFALKY (562 aa). Positions 585–779 are spacer; sequence VPSCEEVIFP…AQDAHLTGVS (195 aa). 4 positions are modified to phosphoserine: Ser-640, Ser-650, Ser-748, and Ser-761. The interval 780 to 944 is domain B; the sequence is KPKRTGSLAL…GRVKSFALKY (165 aa). Phosphoserine occurs at positions 959, 970, and 983. A Phosphothreonine modification is found at Thr-992. Phosphoserine is present on residues Ser-1004 and Ser-1036.

It belongs to the retinoblastoma protein (RB) family. In terms of assembly, component of the DREAM complex (also named LINC complex) at least composed of E2F4, E2F5, LIN9, LIN37, LIN52, LIN54, MYBL1, MYBL2, RBL1, RBL2, RBBP4, TFDP1 and TFDP2. The complex exists in quiescent cells where it represses cell cycle-dependent genes. It dissociates in S phase when LIN9, LIN37, LIN52 and LIN54 form a subcomplex that binds to MYBL2. Interacts with AATF. Interacts with KDM5A. Interacts with KMT5B and KMT5C. Interacts with USP4. Interacts with RBBP9. Post-translationally, cell-cycle arrest properties are inactivated by phosphorylation on Thr-332, Ser-640, Ser-959 and Ser-970 by CDK4. Highly expressed in fetal heart and liver. Expressed at low levels in all other fetal tissues except skeletal muscle. High levels in neonatal spleen and thymus with low levels in other tissues. In adult, highly expressed in testis. Barely detectable in other tissues.

It is found in the nucleus. Key regulator of entry into cell division. Directly involved in heterochromatin formation by maintaining overall chromatin structure and, in particular, that of constitutive heterochromatin by stabilizing histone methylation. Recruits and targets histone methyltransferases KMT5B and KMT5C, leading to epigenetic transcriptional repression. Controls histone H4 'Lys-20' trimethylation. Probably acts as a transcription repressor by recruiting chromatin-modifying enzymes to promoters. Potent inhibitor of E2F-mediated trans-activation. May act as a tumor suppressor. The protein is Retinoblastoma-like protein 1 (Rbl1) of Mus musculus (Mouse).